The sequence spans 73 residues: Toxin Td5 (73 aa).

Positions 1-7 are cleaved as a signal peptide; it reads IGMVVEC. In terms of domain architecture, LCN-type CS-alpha/beta spans 8 to 70; sequence KDGYLVGNDG…IWNSATNRCR (63 aa). Intrachain disulfides connect cysteine 18–cysteine 69, cysteine 22–cysteine 44, cysteine 30–cysteine 50, and cysteine 34–cysteine 52. Arginine 70 carries the post-translational modification Arginine amide.

It belongs to the long (4 C-C) scorpion toxin superfamily. Sodium channel inhibitor family. Beta subfamily. Expressed by the venom gland.

It localises to the secreted. Its function is as follows. Beta toxins bind voltage-independently at site-4 of sodium channels (Nav) and shift the voltage of activation toward more negative potentials thereby affecting sodium channel activation and promoting spontaneous and repetitive firing. This is Toxin Td5 from Tityus discrepans (Venezuelan scorpion).